The sequence spans 96 residues: DNA-directed RNA polymerase subunit Rpo11 (96 aa).

It belongs to the archaeal Rpo11/eukaryotic RPB11/RPC19 RNA polymerase subunit family. Part of the RNA polymerase complex.

The protein localises to the cytoplasm. It catalyses the reaction RNA(n) + a ribonucleoside 5'-triphosphate = RNA(n+1) + diphosphate. In terms of biological role, DNA-dependent RNA polymerase (RNAP) catalyzes the transcription of DNA into RNA using the four ribonucleoside triphosphates as substrates. This is DNA-directed RNA polymerase subunit Rpo11 from Methanococcus maripaludis (strain C5 / ATCC BAA-1333).